The primary structure comprises 92 residues: Phenol 2-monooxygenase, auxiliary component DmpK (92 aa).

As to quaternary structure, homotrimer or homotetramer. Interacts with the phenol hydroxylase components DmpL (P1 component) and DmpN (P3 component).

It participates in aromatic compound metabolism; phenol degradation. Functionally, dmpK is an auxiliary protein associated with the multicomponent phenol hydroxylase DmpLMNOP and it may be involved in the post-translational incorporation of iron into the oxygenase component of the phenol hydroxylase. Required for growth on phenol but not for in vitro phenol hydroxylase activity. The chain is Phenol 2-monooxygenase, auxiliary component DmpK from Pseudomonas sp. (strain CF600).